A 239-amino-acid polypeptide reads, in one-letter code: Ribonuclease PH (239 aa).

Phosphate is bound by residues arginine 87 and 125–127; that span reads GTR.

The protein belongs to the RNase PH family. Homohexameric ring arranged as a trimer of dimers.

The enzyme catalyses tRNA(n+1) + phosphate = tRNA(n) + a ribonucleoside 5'-diphosphate. Its function is as follows. Phosphorolytic 3'-5' exoribonuclease that plays an important role in tRNA 3'-end maturation. Removes nucleotide residues following the 3'-CCA terminus of tRNAs; can also add nucleotides to the ends of RNA molecules by using nucleoside diphosphates as substrates, but this may not be physiologically important. Probably plays a role in initiation of 16S rRNA degradation (leading to ribosome degradation) during starvation. The polypeptide is Ribonuclease PH (Pseudomonas paraeruginosa (strain DSM 24068 / PA7) (Pseudomonas aeruginosa (strain PA7))).